The sequence spans 123 residues: Fluoride-specific ion channel FluC (123 aa).

4 consecutive transmembrane segments (helical) span residues 7 to 27, 39 to 59, 68 to 88, and 100 to 120; these read VAIA…SGIL, LVNS…FWGI, FFGT…YETF, and ALNI…GFIL. Positions 75 and 78 each coordinate Na(+).

It belongs to the fluoride channel Fluc/FEX (TC 1.A.43) family.

It is found in the cell membrane. It carries out the reaction fluoride(in) = fluoride(out). Its activity is regulated as follows. Na(+) is not transported, but it plays an essential structural role and its presence is essential for fluoride channel function. In terms of biological role, fluoride-specific ion channel. Important for reducing fluoride concentration in the cell, thus reducing its toxicity. The polypeptide is Fluoride-specific ion channel FluC (Thermococcus onnurineus (strain NA1)).